Consider the following 410-residue polypeptide: Arginine deiminase (410 aa).

Catalysis depends on Cys-400, which acts as the Amidino-cysteine intermediate.

It belongs to the arginine deiminase family.

The protein resides in the cytoplasm. It carries out the reaction L-arginine + H2O = L-citrulline + NH4(+). Its pathway is amino-acid degradation; L-arginine degradation via ADI pathway; carbamoyl phosphate from L-arginine: step 1/2. The chain is Arginine deiminase (arcA) from Lactococcus lactis subsp. lactis (strain IL1403) (Streptococcus lactis).